Reading from the N-terminus, the 133-residue chain is Profilin-1 (133 aa).

A disulfide bond links cysteine 95 and cysteine 117.

It belongs to the profilin family. Dimer and tetramer. Occurs in many kinds of cells as a complex with monomeric actin in a 1:1 ratio.

Its subcellular location is the cytoplasm. The protein localises to the cytoskeleton. Binds to actin and affects the structure of the cytoskeleton. At high concentrations, profilin prevents the polymerization of actin, whereas it enhances it at low concentrations. By binding to PIP2, it inhibits the formation of IP3 and DG. Possesses high binding affinity for poly(L-proline). The polypeptide is Profilin-1 (Artemisia vulgaris (Mugwort)).